The sequence spans 466 residues: MSLHFGSQVFSSRSAAFPGRGTQVRLSSVRPGGFGSSSSLYGLGASRPRVAARSSYGAPVGTGIRAVTINQSLLTPLQVDIDPSIQQVRQEEREQIKTLNNKFASFIDKVRFLEQQNKLLETKWALLQEQKSAKSNRLPGIFEAQIAGLRKQLEALQLDGGRLEVELRNMQDVVEDFKNKYEDEINHRTAAENEFVVLKKDVDVAYMNKVELEAKVDTLNDEINFLRTLYEQELKELQSEVSDTSVVLSMDNNRSLDLDSIIAEVKAQYEEIANRSRAEAEACYQTKFETLQAQAGKHGDDLQNTRNEIADMNRAVQRLQAEIDSVKNQRSKLEAAIADAEQRGELAVKDARAKQEDLEAALQKAKQDMTRQLREYQELMNVKLALDIEIATYRKLLEGEESRLTGDGVGAVNISVVSSTGGSGSLLTFGGTMGNNALRFSSGGGPGTLKAYSMRTTSATSRSPRK.

Residue S2 is modified to N-acetylserine. S2 and S7 each carry phosphoserine. Residues 2–91 (SLHFGSQVFS…DPSIQQVRQE (90 aa)) form a head region. S12 carries an O-linked (GlcNAc) serine glycan. R20 is modified (dimethylated arginine; alternate). At R20 the chain carries Omega-N-methylarginine; alternate. Phosphoserine is present on residues S54, S72, and S84. The interval 91–127 (EEREQIKTLNNKFASFIDKVRFLEQQNKLLETKWALL) is coil 1A. In terms of domain architecture, IF rod spans 92 to 404 (EREQIKTLNN…KLLEGEESRL (313 aa)). T98 is modified (phosphothreonine). The tract at residues 128-145 (QEQKSAKSNRLPGIFEAQ) is linker 1. K131 is covalently cross-linked (Glycyl lysine isopeptide (Lys-Gly) (interchain with G-Cter in SUMO2)). Residues 146–237 (IAGLRKQLEA…TLYEQELKEL (92 aa)) form a coil 1B region. An N6-acetyllysine modification is found at K180. The linker 12 stretch occupies residues 238 to 261 (QSEVSDTSVVLSMDNNRSLDLDSI). A Phosphoserine modification is found at S255. The coil 2 stretch occupies residues 262 to 400 (IAEVKAQYEE…ATYRKLLEGE (139 aa)). Glycyl lysine isopeptide (Lys-Gly) (interchain with G-Cter in SUMO2) cross-links involve residues K266 and K287. Position 290 is a phosphothreonine (T290). Glycyl lysine isopeptide (Lys-Gly) (interchain with G-Cter in SUMO2) cross-links involve residues K297 and K332. Residues 401 to 466 (ESRLTGDGVG…TSATSRSPRK (66 aa)) form a tail region.

The protein belongs to the intermediate filament family. As to quaternary structure, heterotetramer of two type I and two type II keratins. Interacts with eukaryotic translation initiator factor 3 (eIF3) subunit EIF3S10. Interacts with GPER1. In terms of processing, arg-20 is dimethylated, probably to asymmetric dimethylarginine.

In terms of biological role, blocks interferon-dependent interphase and stimulates DNA synthesis in cells. In Bos taurus (Bovine), this protein is Keratin, type II cytoskeletal 7.